We begin with the raw amino-acid sequence, 138 residues long: Putative pre-16S rRNA nuclease (138 aa).

This sequence belongs to the YqgF nuclease family.

The protein localises to the cytoplasm. Functionally, could be a nuclease involved in processing of the 5'-end of pre-16S rRNA. The polypeptide is Putative pre-16S rRNA nuclease (Salmonella arizonae (strain ATCC BAA-731 / CDC346-86 / RSK2980)).